We begin with the raw amino-acid sequence, 482 residues long: Iroquois-class homeodomain protein irx-5 (482 aa).

A DNA-binding region (homeobox) is located at residues 109-171 (DPAYRKNATR…NARRRLKKEN (63 aa)). 2 disordered regions span residues 173-307 (MTWT…HQSH) and 462-482 (QSQA…MSSI). Residues 182 to 198 (EDEEDDENIDLEKNEED) show a composition bias toward acidic residues. Residues 199–256 (DPRKLEEKGDQDGDAGDQKRSPSAVDFDRLEGEVRQGKELDQTRSDSEQNEVEERNDL) are compositionally biased toward basic and acidic residues. Over residues 264–273 (PTSPLCPPDQ) the composition is skewed to pro residues. The segment covering 284–305 (HRHTVHNHHHQSIQQLHHHSHQ) has biased composition (basic residues). The segment covering 467-482 (LNKDTPYEMKKGMSSI) has biased composition (basic and acidic residues).

This sequence belongs to the TALE/IRO homeobox family. Expressed in the neural plate in overlapping patterns with other irx members, which all share an anterior border of expression. Broadly expressed in the tailbud rhombencephalon (hindbrain). Outside the nervous system and at tailbud stages, expressed in the developing otic vesicle and branchial arches.

It is found in the nucleus. Acts partially redundantly with other irx members in neural patterning. Required for formation of the posterior forebrain, midbrain, hindbrain, and to a lesser extent, spinal cord. Patterns the neuroectoderm in both the anterior/posterior and dorsal/ventral axes. Does not appear to play a role in pronephros kidney development. Involved in craniofacial and gonadal development. Modulates the migration of progenitor cell populations in branchial arches and gonads by repressing CXCL12. The chain is Iroquois-class homeodomain protein irx-5 from Xenopus tropicalis (Western clawed frog).